The primary structure comprises 408 residues: Myb/SANT-like DNA-binding domain-containing protein 4 (408 aa).

One can recognise a Myb-like domain in the interval 4–77 (LKRKRKSNFS…EVKRRYLDWR (74 aa)). A coiled-coil region spans residues 236-367 (HLLVTLEKQK…IEKERLQDAL (132 aa)).

The chain is Myb/SANT-like DNA-binding domain-containing protein 4 (msantd4) from Xenopus tropicalis (Western clawed frog).